The chain runs to 484 residues: ATP synthase subunit beta (484 aa).

168 to 175 contributes to the ATP binding site; that stretch reads GGAGVGKT.

The protein belongs to the ATPase alpha/beta chains family. As to quaternary structure, F-type ATPases have 2 components, CF(1) - the catalytic core - and CF(0) - the membrane proton channel. CF(1) has five subunits: alpha(3), beta(3), gamma(1), delta(1), epsilon(1). CF(0) has three main subunits: a(1), b(2) and c(9-12). The alpha and beta chains form an alternating ring which encloses part of the gamma chain. CF(1) is attached to CF(0) by a central stalk formed by the gamma and epsilon chains, while a peripheral stalk is formed by the delta and b chains.

It localises to the cell membrane. It catalyses the reaction ATP + H2O + 4 H(+)(in) = ADP + phosphate + 5 H(+)(out). Produces ATP from ADP in the presence of a proton gradient across the membrane. The catalytic sites are hosted primarily by the beta subunits. This chain is ATP synthase subunit beta, found in Pseudarthrobacter chlorophenolicus (strain ATCC 700700 / DSM 12829 / CIP 107037 / JCM 12360 / KCTC 9906 / NCIMB 13794 / A6) (Arthrobacter chlorophenolicus).